Here is a 293-residue protein sequence, read N- to C-terminus: MAAITASMVAELRAKTDAPMMECKKALTEADGDMARAEELLRVKLGNKASKAASRVTAEGVVASFIGGNAGSLVELNCETDFVSKNDDFLGFSKKVAELVATQNPADVAALAALPLDGSTVDAVRLALVGKIGENLSIRRFVRFETSNKLAAYLHGTRIGVLVEYTGADEQVGKDVAMHIAAMKPVSLSSDDVPADLIAKERSIAEQKAAESGKPAEIVAKMVEGSVQKYLKEVSLLNQTFVKNDKQTIEQMLKAGNSSVQKFALFVVGEGIEKKQDDFAAEVAAQVAAAKQQ.

Residues 80-83 (TDFV) form an involved in Mg(2+) ion dislocation from EF-Tu region.

Belongs to the EF-Ts family.

It is found in the cytoplasm. Functionally, associates with the EF-Tu.GDP complex and induces the exchange of GDP to GTP. It remains bound to the aminoacyl-tRNA.EF-Tu.GTP complex up to the GTP hydrolysis stage on the ribosome. In Paraburkholderia phytofirmans (strain DSM 17436 / LMG 22146 / PsJN) (Burkholderia phytofirmans), this protein is Elongation factor Ts.